A 152-amino-acid polypeptide reads, in one-letter code: Superoxide dismutase [Cu-Zn] 2 (152 aa).

Cu cation contacts are provided by H45, H47, and H62. The interval 53 to 81 (TNGSMSTGPHFNPDGKQHGAPEDANRHAG) is disordered. Zn(2+) is bound by residues H62, H70, H79, and D82. Basic and acidic residues predominate over residues 65 to 81 (PDGKQHGAPEDANRHAG). H119 contributes to the Cu cation binding site.

It belongs to the Cu-Zn superoxide dismutase family. Homodimer. Cu cation serves as cofactor. It depends on Zn(2+) as a cofactor.

The protein localises to the cytoplasm. The enzyme catalyses 2 superoxide + 2 H(+) = H2O2 + O2. Destroys radicals which are normally produced within the cells and which are toxic to biological systems. The protein is Superoxide dismutase [Cu-Zn] 2 (SODCC2) of Brassica juncea (Indian mustard).